We begin with the raw amino-acid sequence, 461 residues long: Fumarate hydratase class II (461 aa).

Substrate contacts are provided by residues 97–99, 127–130, 137–139, and threonine 185; these read SGT, HPND, and SSN. Residue histidine 186 is the Proton donor/acceptor of the active site. Residue serine 316 is part of the active site. Substrate is bound by residues serine 317 and 322 to 324; that span reads KVN.

This sequence belongs to the class-II fumarase/aspartase family. Fumarase subfamily. Homotetramer.

Its subcellular location is the cytoplasm. The enzyme catalyses (S)-malate = fumarate + H2O. Its pathway is carbohydrate metabolism; tricarboxylic acid cycle; (S)-malate from fumarate: step 1/1. Functionally, involved in the TCA cycle. Catalyzes the stereospecific interconversion of fumarate to L-malate. The sequence is that of Fumarate hydratase class II from Staphylococcus aureus (strain Mu50 / ATCC 700699).